Consider the following 784-residue polypeptide: Toll-like receptor 2 (784 aa).

The N-terminal stretch at 1 to 24 (MLHVLWTFWILVAMTDLSRKGCSA) is a signal peptide. The Extracellular portion of the chain corresponds to 25–588 (QASLSCDAAG…RPSVLECHQT (564 aa)). The cysteines at positions 30 and 36 are disulfide-linked. 19 LRR repeats span residues 54 to 77 (MKSLDLSNNKITSIGHGDLRGCVN), 78 to 101 (LRALILQSSGINTIEEDAFSSLSK), 102 to 125 (LEYLDLSDNHLSNLSSSWFRPLSS), 126 to 150 (LKYLNLLGNPYRILGETPLFLNLTH), 151 to 175 (LQTLRVGNVATFSGIRRTDFAGLTS), 176 to 199 (LDELEIKALSLQNYEPGSLQSIQS), 200 to 223 (IHHLTFHLSQSDFLLGVFEDTLSS), 224 to 250 (VGYLELRDANLDSFYFSELSTDEMNSP), 251 to 278 (MKKLAFQNADLTDESFNELLKLLRYTPE), 279 to 308 (LLEVEFDDCTLNGVGDFQPSESDVVRELGK), 309 to 337 (VETLIIRRLHIPRFYSFYDLSTVYTLLEK), 338 to 361 (VKRITVENSKVFLVPCLFSQHLKS), 362 to 388 (LEFLDLSENLMVEEYLKNAACEGSWPS), 389 to 414 (LQTLILRQNRLKSIERTGKILLTLKN), 415 to 437 (LTALDISRNSFQSMPDSCQWPGK), 438 to 457 (MRFLNLSSTGIQAVKMCIPQ), 458 to 478 (TLEVLDVSNNNLISFSLFLPL), 479 to 500 (LRELYISRNKLHTLPDASLFPV), and 501 to 524 (LLVMKIRENAISTFSKDQLSSFPK). N-linked (GlcNAc...) asparagine glycosylation is found at Asn-114 and Asn-147. Cys-353 and Cys-382 are disulfide-bonded. An N-linked (GlcNAc...) asparagine glycan is attached at Asn-414. A disulfide bridge connects residues Cys-432 and Cys-454. Asn-442 is a glycosylation site (N-linked (GlcNAc...) asparagine). Residues 525–579 (LVSLEAGGNHFICSCELLSFTLEHPALVQVLAGWPDSYLCDSPSRLRGQRVQDAR) form the LRRCT domain. Residues 589–609 (LLVSGVCCALVLLILLIGGLC) form a helical membrane-spanning segment. The Cytoplasmic segment spans residues 610-784 (HHFHGLWYLR…WVNLRTAIKS (175 aa)). The region spanning 639-782 (ICYDAFVSYS…VFWVNLRTAI (144 aa)) is the TIR domain. Lys-754 participates in a covalent cross-link: Glycyl lysine isopeptide (Lys-Gly) (interchain with G-Cter in ubiquitin). The ATG16L1-binding motif signature appears at 761-778 (YLEWPLDEGQQEVFWVNL).

This sequence belongs to the Toll-like receptor family. In terms of assembly, interacts with LY96, TLR1 and TLR6 (via extracellular domain). TLR2 seems to exist in heterodimers with either TLR1 or TLR6 before stimulation by the ligand. The heterodimers form bigger oligomers in response to their corresponding ligands as well as further heterotypic associations with other receptors such as CD14 and/or CD36. Binds MYD88 (via TIR domain). Interacts with TICAM1. Interacts with CNPY3. Interacts with ATG16L1. Interacts with PPP1R11. Interacts with TICAM2. Interacts with TIRAP. Post-translationally, ubiquitinated at Lys-754 by PPP1R11, leading to its degradation. Deubiquitinated by USP2. In terms of processing, glycosylation of Asn-442 is critical for secretion of the N-terminal ectodomain of TLR2.

It localises to the membrane. The protein localises to the cytoplasmic vesicle. It is found in the phagosome membrane. The protein resides in the membrane raft. In terms of biological role, cooperates with LY96 to mediate the innate immune response to bacterial lipoproteins and other microbial cell wall components. Cooperates with TLR1 or TLR6 to mediate the innate immune response to bacterial lipoproteins or lipopeptides. Acts via MYD88 and TRAF6, leading to NF-kappa-B activation, cytokine secretion and the inflammatory response. May also promote apoptosis in response to lipoproteins. Forms activation clusters composed of several receptors depending on the ligand, these clusters trigger signaling from the cell surface and subsequently are targeted to the Golgi in a lipid-raft dependent pathway. Forms the cluster TLR2:TLR6:CD14:CD36 in response to diacylated lipopeptides and TLR2:TLR1:CD14 in response to triacylated lipopeptides. The protein is Toll-like receptor 2 (TLR2) of Cricetulus griseus (Chinese hamster).